The chain runs to 597 residues: Indole-3-acetic acid-amido synthetase GH3.4 (597 aa).

Belongs to the IAA-amido conjugating enzyme family.

Catalyzes the synthesis of indole-3-acetic acid (IAA)-amino acid conjugates, providing a mechanism for the plant to cope with the presence of excess auxin. Strongly reactive with Glu, Gln, Trp, Asp, Ala, Leu, Phe, Gly, Tyr, Met, Ile and Val. Little or no product formation with His, Ser, Thr, Arg, Lys, or Cys. Also active on pyruvic and butyric acid analogs of IAA, PAA and the synthetic auxin naphthaleneacetic acid (NAA). The two chlorinated synthetic auxin herbicides 2,4-D and 3,6-dichloro-o-anisic acid (dicamba) cannot be used as substrates. This chain is Indole-3-acetic acid-amido synthetase GH3.4 (GH3.4), found in Arabidopsis thaliana (Mouse-ear cress).